A 231-amino-acid chain; its full sequence is 5'-methylthioadenosine/S-adenosylhomocysteine nucleosidase (231 aa).

Glu12 (proton acceptor) is an active-site residue. Substrate-binding positions include Gly78, Val153, and 174 to 175 (ME). Asp198 acts as the Proton donor in catalysis.

The protein belongs to the PNP/UDP phosphorylase family. MtnN subfamily.

The catalysed reaction is S-adenosyl-L-homocysteine + H2O = S-(5-deoxy-D-ribos-5-yl)-L-homocysteine + adenine. It catalyses the reaction S-methyl-5'-thioadenosine + H2O = 5-(methylsulfanyl)-D-ribose + adenine. The enzyme catalyses 5'-deoxyadenosine + H2O = 5-deoxy-D-ribose + adenine. It functions in the pathway amino-acid biosynthesis; L-methionine biosynthesis via salvage pathway; S-methyl-5-thio-alpha-D-ribose 1-phosphate from S-methyl-5'-thioadenosine (hydrolase route): step 1/2. In terms of biological role, catalyzes the irreversible cleavage of the glycosidic bond in both 5'-methylthioadenosine (MTA) and S-adenosylhomocysteine (SAH/AdoHcy) to adenine and the corresponding thioribose, 5'-methylthioribose and S-ribosylhomocysteine, respectively. Also cleaves 5'-deoxyadenosine, a toxic by-product of radical S-adenosylmethionine (SAM) enzymes, into 5-deoxyribose and adenine. The sequence is that of 5'-methylthioadenosine/S-adenosylhomocysteine nucleosidase from Vibrio atlanticus (strain LGP32) (Vibrio splendidus (strain Mel32)).